The primary structure comprises 210 residues: Pyridoxine/pyridoxamine 5'-phosphate oxidase (210 aa).

Substrate is bound by residues 7 to 10 (REDY) and K65. Residues 60 to 65 (RMVLLK), 75 to 76 (FT), R81, K82, and Q104 each bind FMN. Substrate is bound by residues Y122, R126, and S130. FMN is bound by residues 139–140 (QS) and W183. 189-191 (RLH) contacts substrate. Residue R193 participates in FMN binding.

It belongs to the pyridoxamine 5'-phosphate oxidase family. Homodimer. FMN is required as a cofactor.

The enzyme catalyses pyridoxamine 5'-phosphate + O2 + H2O = pyridoxal 5'-phosphate + H2O2 + NH4(+). The catalysed reaction is pyridoxine 5'-phosphate + O2 = pyridoxal 5'-phosphate + H2O2. The protein operates within cofactor metabolism; pyridoxal 5'-phosphate salvage; pyridoxal 5'-phosphate from pyridoxamine 5'-phosphate: step 1/1. It participates in cofactor metabolism; pyridoxal 5'-phosphate salvage; pyridoxal 5'-phosphate from pyridoxine 5'-phosphate: step 1/1. Functionally, catalyzes the oxidation of either pyridoxine 5'-phosphate (PNP) or pyridoxamine 5'-phosphate (PMP) into pyridoxal 5'-phosphate (PLP). This is Pyridoxine/pyridoxamine 5'-phosphate oxidase from Neisseria meningitidis serogroup B (strain ATCC BAA-335 / MC58).